The primary structure comprises 194 residues: WASH complex subunit 3 (194 aa).

The residue at position 1 (M1) is an N-acetylmethionine. Residues 46–74 (TVCEEKLADLSLRIQQIETTLNILDAKLS) are a coiled coil. 2 disordered regions span residues 93–121 (SVTN…QESE) and 159–194 (EGLD…SFSD). Over residues 103 to 121 (TSEQPQQNSTQDSGLQESE) the composition is skewed to polar residues.

The protein belongs to the CCDC53 family. As to quaternary structure, component of the WASH core complex also described as WASH regulatory complex (SHRC) composed of WASH (WASHC1, WASH2P or WASH3P), WASHC2 (WASHC2A or WASHC2C), WASHC3, WASHC4 and WASHC5. The WASH core complex associates via WASHC2 with the F-actin-capping protein dimer (formed by CAPZA1, CAPZA2 or CAPZA3 and CAPZB) in a transient or substoichiometric manner which was initially described as WASH complex.

Its subcellular location is the early endosome. Its function is as follows. Acts as a component of the WASH core complex that functions as a nucleation-promoting factor (NPF) at the surface of endosomes, where it recruits and activates the Arp2/3 complex to induce actin polymerization, playing a key role in the fission of tubules that serve as transport intermediates during endosome sorting. This chain is WASH complex subunit 3, found in Homo sapiens (Human).